Here is a 392-residue protein sequence, read N- to C-terminus: 2-oxoisovalerate dehydrogenase subunit beta, mitochondrial (392 aa).

A mitochondrion-targeting transit peptide spans Met1–Gln50. Tyr152 provides a ligand contact to thiamine diphosphate. Positions 178, 180, 181, 228, and 231 each coordinate K(+). Lys232 bears the N6-acetyllysine mark. Asn233 contributes to the K(+) binding site. Lys241 bears the N6-acetyllysine mark.

Heterotetramer of 2 alpha/BCKDHA and 2 beta chains/BCKDHB that forms the branched-chain alpha-keto acid decarboxylase (E1) component of the BCKD complex. The branched-chain alpha-ketoacid dehydrogenase is a large complex composed of three major building blocks E1, E2 and E3. It is organized around E2, a 24-meric cubic core composed of DBT, to which are associated 6 to 12 copies of E1, and approximately 6 copies of the dehydrogenase E3, a DLD dimer. Thiamine diphosphate serves as cofactor.

It is found in the mitochondrion matrix. It carries out the reaction N(6)-[(R)-lipoyl]-L-lysyl-[protein] + 3-methyl-2-oxobutanoate + H(+) = N(6)-[(R)-S(8)-2-methylpropanoyldihydrolipoyl]-L-lysyl-[protein] + CO2. Its function is as follows. Together with BCKDHA forms the heterotetrameric E1 subunit of the mitochondrial branched-chain alpha-ketoacid dehydrogenase (BCKD) complex. The BCKD complex catalyzes the multi-step oxidative decarboxylation of alpha-ketoacids derived from the branched-chain amino-acids valine, leucine and isoleucine producing CO2 and acyl-CoA which is subsequently utilized to produce energy. The E1 subunit catalyzes the first step with the decarboxylation of the alpha-ketoacid forming an enzyme-product intermediate. A reductive acylation mediated by the lipoylamide cofactor of E2 extracts the acyl group from the E1 active site for the next step of the reaction. In Homo sapiens (Human), this protein is 2-oxoisovalerate dehydrogenase subunit beta, mitochondrial.